A 364-amino-acid chain; its full sequence is Melatonin receptor type 1B (364 aa).

The signal sequence occupies residues 1–28 (MPDNSSIANCCAASGLAARPSWPGSAEA). Residues 29–45 (EPPETPRAPWVAPMLST) are Extracellular-facing. Residues 46 to 66 (VVIVTTAVDFVGNLLVILSVL) traverse the membrane as a helical segment. The Cytoplasmic portion of the chain corresponds to 67 to 81 (RNRKLRNAGNLFVVN). The helical transmembrane segment at 82–102 (LALADLVVALYPYPLILVAIL) threads the bilayer. The Extracellular portion of the chain corresponds to 103-115 (HDGWVLGEIHCKA). Cys113 and Cys190 are oxidised to a cystine. A helical membrane pass occupies residues 116–136 (SAFVMGLSVIGSVFNITAIAI). Residues 137–158 (NRYWCICHSATYHRACSQWHAP) are Cytoplasmic-facing. Residues 159–179 (LYISLIWLLTLVALVPNFFVG) traverse the membrane as a helical segment. The Extracellular segment spans residues 180–200 (SLEYDPRIYSCTFIQTASTQY). A helical membrane pass occupies residues 201-221 (TMAVVAIHFLLPIAVVSFCYL). Residues 222-255 (RIWILVLQARRKAKAERKLRLRPSDLRSFLTMFA) are Cytoplasmic-facing. Residues 256–276 (VFVVFAICWAPLNCIGLAVAI) traverse the membrane as a helical segment. The Extracellular portion of the chain corresponds to 277-287 (NPEAMALQIPE). Residues 288–308 (GLFVTSYFLAYFNSCLNAIVY) traverse the membrane as a helical segment. Residues 309-364 (GLLNQNFRREYKRILSALWSTGRCFHDASKCHLTEDLQGPVPPAAMATIPVQEGAL) lie on the Cytoplasmic side of the membrane.

Belongs to the G-protein coupled receptor 1 family. As to expression, expressed in the hippocampus, kidney, and ovary.

Its subcellular location is the cell membrane. Functionally, high affinity receptor for melatonin. The activity of this receptor is mediated by pertussis toxin sensitive G proteins that inhibits adenylate cyclase activity. The polypeptide is Melatonin receptor type 1B (Rattus norvegicus (Rat)).